We begin with the raw amino-acid sequence, 303 residues long: 4-diphosphocytidyl-2-C-methyl-D-erythritol kinase (303 aa).

The active site involves K18. 111–121 (PVASGIGGGSA) is a binding site for ATP. D153 is an active-site residue.

Belongs to the GHMP kinase family. IspE subfamily.

The catalysed reaction is 4-CDP-2-C-methyl-D-erythritol + ATP = 4-CDP-2-C-methyl-D-erythritol 2-phosphate + ADP + H(+). It participates in isoprenoid biosynthesis; isopentenyl diphosphate biosynthesis via DXP pathway; isopentenyl diphosphate from 1-deoxy-D-xylulose 5-phosphate: step 3/6. Catalyzes the phosphorylation of the position 2 hydroxy group of 4-diphosphocytidyl-2C-methyl-D-erythritol. The polypeptide is 4-diphosphocytidyl-2-C-methyl-D-erythritol kinase (Sinorhizobium medicae (strain WSM419) (Ensifer medicae)).